We begin with the raw amino-acid sequence, 276 residues long: Undecaprenyl-diphosphatase 1 (276 aa).

Transmembrane regions (helical) follow at residues 4–24 (ILIC…FLPV), 46–63 (TFDV…CWEY), 83–103 (FTLN…LFEK), 108–128 (VLFS…IILW), 187–207 (VATE…TLYE), 217–237 (VDSL…AFVC), and 252–272 (VFAW…YSGW).

It belongs to the UppP family.

The protein resides in the cell inner membrane. The catalysed reaction is di-trans,octa-cis-undecaprenyl diphosphate + H2O = di-trans,octa-cis-undecaprenyl phosphate + phosphate + H(+). Functionally, catalyzes the dephosphorylation of undecaprenyl diphosphate (UPP). Confers resistance to bacitracin. This Burkholderia lata (strain ATCC 17760 / DSM 23089 / LMG 22485 / NCIMB 9086 / R18194 / 383) protein is Undecaprenyl-diphosphatase 1.